A 340-amino-acid chain; its full sequence is Anthranilate phosphoribosyltransferase (340 aa).

5-phospho-alpha-D-ribose 1-diphosphate is bound by residues Gly-82, 85-86 (GD), Thr-90, 92-95 (NISS), 110-118 (KHGGRSVSS), and Ala-122. Position 82 (Gly-82) interacts with anthranilate. Position 94 (Ser-94) interacts with Mg(2+). Arg-168 lines the anthranilate pocket. Mg(2+) contacts are provided by Asp-227 and Glu-228.

Belongs to the anthranilate phosphoribosyltransferase family. As to quaternary structure, homodimer. The cofactor is Mg(2+).

The enzyme catalyses N-(5-phospho-beta-D-ribosyl)anthranilate + diphosphate = 5-phospho-alpha-D-ribose 1-diphosphate + anthranilate. The protein operates within amino-acid biosynthesis; L-tryptophan biosynthesis; L-tryptophan from chorismate: step 2/5. Catalyzes the transfer of the phosphoribosyl group of 5-phosphorylribose-1-pyrophosphate (PRPP) to anthranilate to yield N-(5'-phosphoribosyl)-anthranilate (PRA). This is Anthranilate phosphoribosyltransferase from Dechloromonas aromatica (strain RCB).